A 1020-amino-acid chain; its full sequence is MSRVISRSTPGGTCIVSKDDFLKSFEEVPKMEISSPSDFKEKLDQTIETLSKGQEDWNKRMNKLKQIRSMVVHGEDVIGREQLLSQLVRLTDCLDLSVKDLRSQILREAAITCGFLFKRFGTDVRQIAERCLPSAFAQVAVSTKVMATCGAVLTLFIVEFIQTKQIFTCIASYSTSKDKNQRRQLCALLEIVLEHWNEKIKRTVLPQIGELIKAAICDADPETRVAGRKAFSKLDALHSTEADKLFASVDSSKQKMLRASDAASSSTSINSERGTAPFRSKLSAGSIGGIRNAPNISSKFLAQRSASAIDTKQVTRMATSVSRTPNIRPMTTRTLSKIDTSPGGSKFARPTVGALGSRTSSNLRARGSVPTSQPGSRNGSPPRRPSATEAFPAEMQRVKSNLGSNSFVSSLSAEEATKLQKAMNTAKESLRQPSRNDDDEFLLPKRPTPQKATPQKSALDTSRVEEVIRACSSTSANEKREGIKMLAGIVSEPNLSNAEIKSLGAVLNRLLGESTNQIVLESISSFVKTHHPRLSDWLKLGLGKLFAKKGAEMTLNSKKQISTTISCILSSFDPTLQLKSTCELVCDPIHLMSPKSRVVLLEYLNELLGKYMERGSSFNTKEMKATILKMFSWMADQRNEQLITPHGEKVLCSLFALNNADFSALFNDFNPDYRDWAYKVLQSHGHDQHVPQQDAVSEEACVRATISTTAAQIEDFVVSRNLDMTPVKSPSTRAISSGFKRVDAEPLRPLSSEMNSQHRDEELSFNESFDRLKLNSTTHLIDDTSEQSKYVASKLAQISGDMGAQQYEGLLSIQTMLCEGSFTLWEQNFAKLLIAVFDVLSKSESDANKKVALRVLTKMCTSQASRLFDSTEMAICKVLDAAVNSQDGTMNVTADDCLKTLATHLPLAKVVNISQLILNEEKAQEPKASLVLKMMTRLFEGLQADELSPVVDDLAPCVIKSYDSPSSAVRKTAVYCLVAMVNKLGMKTMEPHLQNLSSGKLNLVQVYVNRAMSSSSHSHV.

A compositionally biased stretch (low complexity) spans 259-271 (ASDAASSSTSINS). Disordered regions lie at residues 259-280 (ASDA…PFRS), 329-387 (PMTT…RPSA), and 419-461 (LQKA…ALDT). The segment covering 329 to 343 (PMTTRTLSKIDTSPG) has biased composition (polar residues). The segment covering 372 to 381 (SQPGSRNGSP) has biased composition (low complexity). Residues 450–460 (QKATPQKSALD) show a composition bias toward polar residues. An HEAT repeat occupies 954–992 (LAPCVIKSYDSPSSAVRKTAVYCLVAMVNKLGMKTMEPH).

This sequence belongs to the CLASP family. Interacts with hcp-1 and hcp-2.

It is found in the cytoplasm. It localises to the cytoskeleton. The protein resides in the microtubule organizing center. The protein localises to the centrosome. Its subcellular location is the chromosome. It is found in the centromere. It localises to the kinetochore. The protein resides in the spindle. Probable microtubule plus-end tracking protein that promotes the stabilization of dynamic microtubules. Required for the formation of mitotic and meiotic spindles. Specifically promotes the polymerization of kinetochore-bound microtubules. Also required for cytoplasmic streaming. Essential for embryonic development. This chain is Protein CLASP-2 (cls-2), found in Caenorhabditis elegans.